The sequence spans 397 residues: Acetate kinase (397 aa).

Asn8 contributes to the Mg(2+) binding site. Lys15 contributes to the ATP binding site. A substrate-binding site is contributed by Arg89. Residue Asp146 is the Proton donor/acceptor of the active site. ATP contacts are provided by residues 206–210, 281–283, and 329–333; these read HLGNG, DLR, and GIGEN. A Mg(2+)-binding site is contributed by Glu382.

The protein belongs to the acetokinase family. As to quaternary structure, homodimer. Requires Mg(2+) as cofactor. Mn(2+) is required as a cofactor.

It localises to the cytoplasm. The catalysed reaction is acetate + ATP = acetyl phosphate + ADP. It participates in metabolic intermediate biosynthesis; acetyl-CoA biosynthesis; acetyl-CoA from acetate: step 1/2. Catalyzes the formation of acetyl phosphate from acetate and ATP. Can also catalyze the reverse reaction. The polypeptide is Acetate kinase (Anoxybacillus flavithermus (strain DSM 21510 / WK1)).